Reading from the N-terminus, the 739-residue chain is Polyribonucleotide nucleotidyltransferase (739 aa).

The Mg(2+) site is built by aspartate 488 and aspartate 494. The 60-residue stretch at 555-614 (PKIVTLKINPDKIRDVIGPGGKVINGIIDETGVKIDIDQDGTVFIASTDQDGINHARQLI) folds into the KH domain. The S1 motif domain maps to 624–692 (GEEFDGTVRR…DKGRVNASHK (69 aa)). Residues 698–739 (GMSPEDRAAYDEKKKTERDSRPPRRDTGSRPPRDGQRPPRRN) form a disordered region. Residues 701–739 (PEDRAAYDEKKKTERDSRPPRRDTGSRPPRDGQRPPRRN) are compositionally biased toward basic and acidic residues.

The protein belongs to the polyribonucleotide nucleotidyltransferase family. Mg(2+) serves as cofactor.

The protein resides in the cytoplasm. It carries out the reaction RNA(n+1) + phosphate = RNA(n) + a ribonucleoside 5'-diphosphate. In terms of biological role, involved in mRNA degradation. Catalyzes the phosphorolysis of single-stranded polyribonucleotides processively in the 3'- to 5'-direction. The polypeptide is Polyribonucleotide nucleotidyltransferase (Exiguobacterium sibiricum (strain DSM 17290 / CCUG 55495 / CIP 109462 / JCM 13490 / 255-15)).